The following is an 864-amino-acid chain: Probable M1 family aminopeptidase 1 (864 aa).

Substrate is bound by residues E149 and 289–293 (GAMEN). H325 is a binding site for Zn(2+). E326 serves as the catalytic Proton acceptor. H329 and E348 together coordinate Zn(2+).

It belongs to the peptidase M1 family. Zn(2+) is required as a cofactor.

The chain is Probable M1 family aminopeptidase 1 from Encephalitozoon cuniculi (strain GB-M1) (Microsporidian parasite).